The following is a 116-amino-acid chain: Large ribosomal subunit protein uL18 (116 aa).

The protein belongs to the universal ribosomal protein uL18 family. In terms of assembly, part of the 50S ribosomal subunit; part of the 5S rRNA/L5/L18/L25 subcomplex. Contacts the 5S and 23S rRNAs.

In terms of biological role, this is one of the proteins that bind and probably mediate the attachment of the 5S RNA into the large ribosomal subunit, where it forms part of the central protuberance. The sequence is that of Large ribosomal subunit protein uL18 from Pseudomonas entomophila (strain L48).